We begin with the raw amino-acid sequence, 200 residues long: MEDKKKKRSPKPCLTQPAQAPGTLRRVPVPTSHSGSLALGLPHLPSPKQRAKFKRAGKEKCRPVLAGGGGGSAGTPLQHSFLTEVTDVYEMEGGLLNLLNDFHSGRLQAFGKECSFEQLEHVREMQEKLARLHFSLDVCGEEEDEEEEEDGVTEGLPEEQKKTMADRNLDQLLSNLEDLSNSIQKLHLAENAEPEDQPAA.

Residue Met-1 is modified to N-acetylmethionine. A compositionally biased stretch (basic residues) spans 1–10 (MEDKKKKRSP). The interval 1 to 49 (MEDKKKKRSPKPCLTQPAQAPGTLRRVPVPTSHSGSLALGLPHLPSPKQ) is disordered. Ser-46 and Ser-115 each carry phosphoserine. Acidic residues predominate over residues 140–152 (GEEEDEEEEEDGV). The interval 140–165 (GEEEDEEEEEDGVTEGLPEEQKKTMA) is disordered. A coiled-coil region spans residues 158-189 (EEQKKTMADRNLDQLLSNLEDLSNSIQKLHLA).

As to quaternary structure, interacts with BBS1, BBS2, BBS4, BBS5, BBS6, BBS7 and TTC8/BBS8. Interacts with MAPKAP1/SIN1 isoform 1 and RICTOR. As to expression, expressed in the retina, pericardium and limb epithelium.

The protein resides in the cytoplasm. The protein localises to the cytoskeleton. It localises to the microtubule organizing center. Its subcellular location is the centrosome. Involved in ciliogenesis. Regulates cilia length through its interaction with MAPKAP1/SIN1 but independently of mTORC2 complex. Modulates mTORC2 complex assembly and function, possibly enhances AKT1 phosphorylation. Does not seem to modulate assembly and function of mTORC1 complex. This is Coiled-coil domain-containing protein 28B (Ccdc28b) from Mus musculus (Mouse).